The chain runs to 299 residues: HTH-type transcriptional regulator ArgP (299 aa).

The HTH lysR-type domain occupies Leu-4–Thr-60. Positions Phe-21 to Lys-40 form a DNA-binding region, H-T-H motif.

Belongs to the LysR transcriptional regulatory family. In terms of assembly, homodimer.

Controls the transcription of genes involved in arginine and lysine metabolism. The protein is HTH-type transcriptional regulator ArgP of Aeromonas salmonicida.